Consider the following 2153-residue polypeptide: RNA-directed RNA polymerase L (2153 aa).

The Mn(2+) site is built by His-36, Glu-54, Asp-97, Glu-110, and Val-111. Catalysis depends on Lys-124, which acts as the For endonuclease activity. Positions 957–1143 constitute a RdRp catalytic domain; it reads TGKSIKFKRK…AINQEMWKSM (187 aa). Asp-1100 lines the Mg(2+) pocket.

This sequence belongs to the Bunyavirales RNA polymerase family. As to quaternary structure, interacts with the viral nucleoprotein. Mn(2+) is required as a cofactor. Mg(2+) serves as cofactor.

It is found in the host cytoplasm. It localises to the host perinuclear region. It catalyses the reaction RNA(n) + a ribonucleoside 5'-triphosphate = RNA(n+1) + diphosphate. Its function is as follows. RNA-dependent RNA polymerase, which is responsible for the replication and transcription of the viral RNA genome using antigenomic RNA as an intermediate. During transcription, synthesizes subgenomic RNAs and assures their capping by a cap-snatching mechanism, which involves the endonuclease activity cleaving the host capped pre-mRNAs. These short capped RNAs are then used as primers for viral transcription. Cleaves ssRNA substrates but not DNA. Seems to downregulate the expression of its own and heterologous mRNAs through its endonuclease activity. The chain is RNA-directed RNA polymerase L from Abrothrix longipilis (Long-haired grass mouse).